Here is a 312-residue protein sequence, read N- to C-terminus: Pre-mRNA-splicing factor 38A (312 aa).

Residues 1 to 179 (MANRTVKDAH…VLEETEQLDP (179 aa)) are N-terminal protein interaction domain. Positions 180-312 (RVSALEEDMD…SHKKSRRGNE (133 aa)) are disordered. The span at 184–201 (LEEDMDDVESSEEEEDDD) shows a compositional bias: acidic residues. Basic and acidic residues predominate over residues 202-223 (EKGRDPSPEHHRRNYRDLDRPR). Basic residues-rich tracts occupy residues 224 to 294 (RSPS…RSHS) and 301 to 312 (KKSHKKSRRGNE).

The protein belongs to the PRP38 family. Component of the spliceosome B complex.

The protein resides in the nucleus. Functionally, involved in pre-mRNA splicing as a component of the spliceosome. The chain is Pre-mRNA-splicing factor 38A (prpf38a) from Xenopus laevis (African clawed frog).